The chain runs to 158 residues: 14-3-3 protein gamma (158 aa).

The tract at residues 1–158 is interaction with SPATA18/MIEAP; it reads AAAMKNVTEL…TSDQQDDDGG (158 aa). The residue at position 48 (serine 48) is a Phosphoserine. Tyrosine 60 is subject to Phosphotyrosine. Threonine 72 is subject to Phosphothreonine. Serine 130 carries the phosphoserine modification. Threonine 149 carries the post-translational modification Phosphothreonine. At serine 150 the chain carries Phosphoserine.

It belongs to the 14-3-3 family. As to quaternary structure, homodimer. Part of a complex that contains DSG3, PKP1, YAP1 and YWHAG; the complex is required for localization of DSG3 and YAP1 to the cell membrane in keratinocytes. Interacts with SAMSN1. Interacts with RAF1, SSH1 and CRTC2/TORC2. Interacts with ABL1 (phosphorylated form); the interaction retains it in the cytoplasm. Interacts with GAB2. Interacts with MDM4 (phosphorylated); negatively regulates MDM4 activity toward TP53. Interacts with PKA-phosphorylated AANAT and SIRT2. Interacts with the 'Thr-369' phosphorylated form of DAPK2. Interacts with PI4KB, TBC1D22A and TBC1D22B. Interacts with SLITRK1. Interacts with LRRK2; this interaction is dependent on LRRK2 phosphorylation. Interacts with MARK2 and MARK3. Interacts with MEFV. Interacts with ENDOG, TSC2 and PIK3C3; interaction with ENDOG weakens its interaction with TSC2 and PIK3C3. Interacts with (phosphorylated) WDR24. Interacts with BEST1; this interaction promotes L-glutamate channel activity leading to the positive regulation of NMDA glutamate receptor activity through the L-glutamate secretion. Interacts with PKP1 (when phosphorylated); the interaction results in translocation of PKP1 to the cytoplasm and loss of intercellular adhesion in keratinocytes. Interacts with SPATA18/MIEAP; a protein that also plays a role in MALM. Post-translationally, phosphorylated by various PKC isozymes.

The protein resides in the cytoplasm. Its subcellular location is the cytosol. The protein localises to the mitochondrion matrix. In terms of biological role, adapter protein implicated in the regulation of a large spectrum of both general and specialized signaling pathways. Binds to a large number of partners, usually by recognition of a phosphoserine or phosphothreonine motif. Binding generally results in the modulation of the activity of the binding partner. Promotes inactivation of WDR24 component of the GATOR2 complex by binding to phosphorylated WDR24. Participates in the positive regulation of NMDA glutamate receptor activity by promoting the L-glutamate secretion through interaction with BEST1. Reduces keratinocyte intercellular adhesion, via interacting with PKP1 and sequestering it in the cytoplasm, thereby reducing its incorporation into desmosomes. Plays a role in mitochondrial protein catabolic process (also named MALM) that promotes the degradation of damaged proteins inside mitochondria. This chain is 14-3-3 protein gamma, found in Ovis aries (Sheep).